The primary structure comprises 488 residues: 3-octaprenyl-4-hydroxybenzoate carboxy-lyase (488 aa).

Position 172 (Asn172) interacts with Mn(2+). Residues 175-177 (IYR), 189-191 (RWL), and 194-195 (RG) each bind prenylated FMN. Position 238 (Glu238) interacts with Mn(2+). The active-site Proton donor is the Asp287.

This sequence belongs to the UbiD family. Homohexamer. The cofactor is prenylated FMN. Requires Mn(2+) as cofactor.

It localises to the cell membrane. The enzyme catalyses a 4-hydroxy-3-(all-trans-polyprenyl)benzoate + H(+) = a 2-(all-trans-polyprenyl)phenol + CO2. It functions in the pathway cofactor biosynthesis; ubiquinone biosynthesis. Its function is as follows. Catalyzes the decarboxylation of 3-octaprenyl-4-hydroxy benzoate to 2-octaprenylphenol, an intermediate step in ubiquinone biosynthesis. This chain is 3-octaprenyl-4-hydroxybenzoate carboxy-lyase, found in Stutzerimonas stutzeri (strain A1501) (Pseudomonas stutzeri).